Consider the following 357-residue polypeptide: MVRAFKIKVPASSANIGPGYDVLGVGLSLFLELDVTIDSSQAQETNDDPNNCKLSYTKESEGYSTVPLRSDANLITRTALYVLRCNNIRNFPSGTKVHVSNPIPLGRGLGSSGAAVVAGVILGNEVAQLGFSKQRMLDYCLMIERHPDNITAAMMGGFCGSFLRDLTPQEVERREIPLAEVLPEPSGGEDTGLVPPLPPTDIGRHVKYQWNPAIKCIAIIPQFELSTADSRGVLPKAYPTQDLVFNLQRLAVLTTALTMDPPNADLIYPAMQDRVHQPYRKTLIPGLTEILSCVTPSTYPGLLGICLSGAGPTILALATENFEEISQEIINRFAKNGIKCSWKLLEPAYDGASVEQQ.

A Glycyl lysine isopeptide (Lys-Gly) (interchain with G-Cter in ubiquitin) cross-link involves residue lysine 133.

This sequence belongs to the GHMP kinase family. Homoserine kinase subfamily. In terms of assembly, homodimer.

The catalysed reaction is L-homoserine + ATP = O-phospho-L-homoserine + ADP + H(+). It participates in amino-acid biosynthesis; L-threonine biosynthesis; L-threonine from L-aspartate: step 4/5. Functionally, commits homoserine to the threonine biosynthesis pathway by catalyzing its O-phosphorylation. In Saccharomyces cerevisiae (strain ATCC 204508 / S288c) (Baker's yeast), this protein is Homoserine kinase (THR1).